A 48-amino-acid polypeptide reads, in one-letter code: uncharacterized protein (48 aa).

Residues 25–47 (TFASIGVTVGVQIVILLIWGLSW) form a helical membrane-spanning segment.

The protein resides in the membrane. This is an uncharacterized protein from Archaeoglobus fulgidus (strain ATCC 49558 / DSM 4304 / JCM 9628 / NBRC 100126 / VC-16).